The following is a 357-amino-acid chain: Isopentenyl-diphosphate delta-isomerase (357 aa).

12–13 (RK) provides a ligand contact to substrate. Residues S70, 71–73 (SMT), S101, and N130 each bind FMN. 101-103 (SMR) is a substrate binding site. Position 165 (Q165) interacts with substrate. E166 contacts Mg(2+). Residues K197 and 310–311 (AR) contribute to the FMN site.

Belongs to the IPP isomerase type 2 family. As to quaternary structure, homooctamer. Dimer of tetramers. It depends on FMN as a cofactor. NADPH serves as cofactor. The cofactor is Mg(2+).

The protein resides in the cytoplasm. It carries out the reaction isopentenyl diphosphate = dimethylallyl diphosphate. Functionally, involved in the biosynthesis of isoprenoids. Catalyzes the 1,3-allylic rearrangement of the homoallylic substrate isopentenyl (IPP) to its allylic isomer, dimethylallyl diphosphate (DMAPP). In Pelodictyon phaeoclathratiforme (strain DSM 5477 / BU-1), this protein is Isopentenyl-diphosphate delta-isomerase.